The sequence spans 186 residues: Riboflavin kinase (186 aa).

Mg(2+) is bound by residues Thr42 and Asn44. Glu123 serves as the catalytic Nucleophile.

The protein belongs to the flavokinase family. It depends on Zn(2+) as a cofactor. The cofactor is Mg(2+).

It catalyses the reaction riboflavin + ATP = FMN + ADP + H(+). It participates in cofactor biosynthesis; FMN biosynthesis; FMN from riboflavin (ATP route): step 1/1. Functionally, catalyzes the phosphorylation of riboflavin (vitamin B2) to form flavin mononucleotide (FMN) coenzyme. The polypeptide is Riboflavin kinase (FMN1) (Eremothecium gossypii (strain ATCC 10895 / CBS 109.51 / FGSC 9923 / NRRL Y-1056) (Yeast)).